Here is a 293-residue protein sequence, read N- to C-terminus: Diaminopimelate epimerase (293 aa).

Positions 15, 47, and 67 each coordinate substrate. Cys76 acts as the Proton donor in catalysis. Residues 77 to 78 (GN), Asn163, Asn197, and 215 to 216 (ER) each bind substrate. Cys224 acts as the Proton acceptor in catalysis. 225-226 (GS) contributes to the substrate binding site.

The protein belongs to the diaminopimelate epimerase family. Homodimer.

The protein localises to the cytoplasm. The enzyme catalyses (2S,6S)-2,6-diaminopimelate = meso-2,6-diaminopimelate. The protein operates within amino-acid biosynthesis; L-lysine biosynthesis via DAP pathway; DL-2,6-diaminopimelate from LL-2,6-diaminopimelate: step 1/1. Its function is as follows. Catalyzes the stereoinversion of LL-2,6-diaminopimelate (L,L-DAP) to meso-diaminopimelate (meso-DAP), a precursor of L-lysine and an essential component of the bacterial peptidoglycan. The polypeptide is Diaminopimelate epimerase (Chelativorans sp. (strain BNC1)).